A 718-amino-acid polypeptide reads, in one-letter code: Catalase (718 aa).

Catalysis depends on residues H103 and N176. Y390 lines the heme pocket.

It belongs to the catalase family. Requires heme as cofactor.

The protein localises to the peroxisome matrix. The catalysed reaction is 2 H2O2 = O2 + 2 H2O. In terms of biological role, catalyzes the degradation of hydrogen peroxide (H(2)O(2)) generated by peroxisomal oxidases to water and oxygen, thereby protecting cells from the toxic effects of hydrogen peroxide. The protein is Catalase (CAT1) of Blumeria hordei (Barley powdery mildew).